A 256-amino-acid polypeptide reads, in one-letter code: Transmembrane protein 187 (256 aa).

7 helical membrane passes run 8-28, 51-71, 94-112, 119-139, 146-168, 193-213, and 233-253; these read ALFH…TGIF, FLAM…GVYW, VFAG…RIGM, VLDQ…CLCL, WLFL…HPHG, NISS…FVVL, and FWSK…LTSL.

It localises to the membrane. This Bos taurus (Bovine) protein is Transmembrane protein 187 (TMEM187).